Consider the following 257-residue polypeptide: Chymotrypsin-like elastase family member 3B (257 aa).

A signal peptide (or 3) is located at residues 1–2 (VA). A propeptide spans 3–15 (SGYGPPSSHPSSR) (activation peptide). In terms of domain architecture, Peptidase S1 spans 16-255 (VVNGEDAVPY…FIDWIEETIA (240 aa)). N-linked (GlcNAc...) asparagine glycosylation occurs at Asn38. Intrachain disulfides connect Cys45–Cys61 and Cys104–Cys107. His60 functions as the Charge relay system in the catalytic mechanism. Asp110 (charge relay system) is an active-site residue. 3 disulfide bridges follow: Cys144/Cys210, Cys175/Cys191, and Cys200/Cys231. Catalysis depends on Ser204, which acts as the Charge relay system.

Belongs to the peptidase S1 family. Elastase subfamily.

It catalyses the reaction Preferential cleavage: Ala-|-Xaa. Does not hydrolyze elastin.. Functionally, efficient protease with alanine specificity but only little elastolytic activity. This Macaca mulatta (Rhesus macaque) protein is Chymotrypsin-like elastase family member 3B (CELA3B).